An 84-amino-acid chain; its full sequence is Putative defensin-like protein 38 (84 aa).

An N-terminal signal peptide occupies residues 1 to 26 (MASSKNGTVLFVSLMILLLISTGVKA). 4 cysteine pairs are disulfide-bonded: Cys-28/Cys-84, Cys-41/Cys-65, Cys-50/Cys-76, and Cys-54/Cys-78.

Belongs to the DEFL family.

Its subcellular location is the secreted. The chain is Putative defensin-like protein 38 from Arabidopsis thaliana (Mouse-ear cress).